A 364-amino-acid polypeptide reads, in one-letter code: Large ribosomal subunit protein uL22m (364 aa).

This sequence belongs to the universal ribosomal protein uL22 family. Component of the mitochondrial large ribosomal subunit (mt-LSU). Mature N.crassa 74S mitochondrial ribosomes consist of a small (37S) and a large (54S) subunit. The 37S small subunit contains a 16S ribosomal RNA (16S mt-rRNA) and 32 different proteins. The 54S large subunit contains a 23S rRNA (23S mt-rRNA) and 42 different proteins. uL22m forms the wall of the exit tunnel.

It is found in the mitochondrion. Component of the mitochondrial ribosome (mitoribosome), a dedicated translation machinery responsible for the synthesis of mitochondrial genome-encoded proteins, including at least some of the essential transmembrane subunits of the mitochondrial respiratory chain. The mitoribosomes are attached to the mitochondrial inner membrane and translation products are cotranslationally integrated into the membrane. In Neurospora crassa (strain ATCC 24698 / 74-OR23-1A / CBS 708.71 / DSM 1257 / FGSC 987), this protein is Large ribosomal subunit protein uL22m (mrpl22).